The chain runs to 563 residues: Nicalin (563 aa).

A signal peptide spans 1 to 29 (MQDEIIDFFRSPALLFYMTLMLTICVVNG). Residues 30-522 (SQQVGEVVET…NRLVAERVKP (493 aa)) are Lumenal-facing. Asn-232 is a glycosylation site (N-linked (GlcNAc...) asparagine). A helical transmembrane segment spans residues 523 to 543 (AVFELVIAAGVFTYLSAFYYI). Residues 544 to 563 (ATHSQNTIEGTVAAIRKSIF) lie on the Cytoplasmic side of the membrane.

The protein belongs to the nicastrin family. In terms of assembly, may interact with the levamisole-sensitive nicotinic acetylcholine receptor (L-AChR). May interact with nra-4 in the ER. Expressed in body wall, pharyngeal, and vulval muscles, excretory canal cell, head and motor neurons, and vulval epithelium.

The protein resides in the endoplasmic reticulum membrane. Its function is as follows. Involved in the recognition and selection of protein complexes to exit the endoplasmic reticulum (ER). In muscles, regulates levamisole-sensitive nicotinic acetylcholine receptor (L-AChR) subunit composition, possibly by allowing only specific L-AChR subunit combinations to exit the ER. Specifically, may promote the inclusion of alpha subunits unc-38 and unc-29 into L-AChR. Regulates L-AChR sensitivity to agonists such as nicotine and levamisole at neuro-muscular junctions. In touch neurons, may prevent ER exit of incorrectly folded mec-4-mec-10 ion channel. This is Nicalin from Caenorhabditis elegans.